Here is a 185-residue protein sequence, read N- to C-terminus: Ribosome-recycling factor (185 aa).

The protein belongs to the RRF family.

The protein resides in the cytoplasm. In terms of biological role, responsible for the release of ribosomes from messenger RNA at the termination of protein biosynthesis. May increase the efficiency of translation by recycling ribosomes from one round of translation to another. This chain is Ribosome-recycling factor, found in Zymomonas mobilis subsp. mobilis (strain ATCC 31821 / ZM4 / CP4).